The primary structure comprises 224 residues: 7-cyano-7-deazaguanine synthase (224 aa).

10–20 (LSGGLDSATVV) is an ATP binding site. Zn(2+) contacts are provided by C189, C199, C202, and C205.

Belongs to the QueC family. Zn(2+) is required as a cofactor.

It catalyses the reaction 7-carboxy-7-deazaguanine + NH4(+) + ATP = 7-cyano-7-deazaguanine + ADP + phosphate + H2O + H(+). It functions in the pathway purine metabolism; 7-cyano-7-deazaguanine biosynthesis. In terms of biological role, catalyzes the ATP-dependent conversion of 7-carboxy-7-deazaguanine (CDG) to 7-cyano-7-deazaguanine (preQ(0)). The sequence is that of 7-cyano-7-deazaguanine synthase from Pseudomonas putida (strain ATCC 47054 / DSM 6125 / CFBP 8728 / NCIMB 11950 / KT2440).